The following is a 175-amino-acid chain: MAIDFKEHIASVQDFPNKGIVFRDITPILQDGKLYRAATHELADYAKSRGAEVIVGPEARGFIVGCPVATELGVGFVPARKPHKLPREVESASYDLEYGSNVLEMHKDAIKPGQKVVICDDLMATAGTLHATKELIENLGGEVVGAAFYIELTDLKGREQFPDLDIYSLVKYSDA.

This sequence belongs to the purine/pyrimidine phosphoribosyltransferase family. In terms of assembly, homodimer.

It is found in the cytoplasm. It carries out the reaction AMP + diphosphate = 5-phospho-alpha-D-ribose 1-diphosphate + adenine. The protein operates within purine metabolism; AMP biosynthesis via salvage pathway; AMP from adenine: step 1/1. Its function is as follows. Catalyzes a salvage reaction resulting in the formation of AMP, that is energically less costly than de novo synthesis. This chain is Adenine phosphoribosyltransferase, found in Lactobacillus johnsonii (strain CNCM I-12250 / La1 / NCC 533).